The sequence spans 74 residues: UPF0346 protein YozE (74 aa).

The protein belongs to the UPF0346 family.

The protein is UPF0346 protein YozE (yozE) of Bacillus subtilis (strain 168).